A 430-amino-acid chain; its full sequence is Long-chain specific acyl-CoA dehydrogenase, mitochondrial (430 aa).

The N-terminal 30 residues, 1-30, are a transit peptide targeting the mitochondrion; that stretch reads MAARLLRGSLRFLGGHCAARPLPALRCSHS. An N6-acetyllysine modification is found at lysine 42. Phosphoserine occurs at positions 54 and 55. Lysine 66 and lysine 81 each carry N6-acetyllysine; alternate. 2 positions are modified to N6-succinyllysine; alternate: lysine 66 and lysine 81. N6-acetyllysine occurs at positions 92 and 95. At lysine 165 the chain carries N6-succinyllysine. Residues 170 to 179 and 203 to 205 contribute to the FAD site; these read IAMTELGAGS and FIS. Serine 179 serves as a coordination point for substrate. 227 to 228 contributes to the substrate binding site; it reads AR. Lysine 240 is subject to N6-succinyllysine. 2 positions are modified to N6-acetyllysine; alternate: lysine 254 and lysine 279. N6-succinyllysine; alternate occurs at positions 254 and 279. Substrate is bound by residues tyrosine 282 and 289-292; that span reads PQER. Catalysis depends on glutamate 291, which acts as the Proton acceptor. Position 317 (arginine 317) interacts with FAD. Lysine 318 is subject to N6-acetyllysine. The residue at position 322 (lysine 322) is an N6-acetyllysine; alternate. The residue at position 322 (lysine 322) is an N6-succinyllysine; alternate. Glutamine 328 contributes to the FAD binding site. Position 358 is an N6-acetyllysine (lysine 358). Residue serine 362 is modified to Phosphoserine. An FAD-binding site is contributed by 385-389; it reads QLHGG. Residue 412-413 coordinates substrate; that stretch reads GG. 414-416 lines the FAD pocket; it reads TNE.

Belongs to the acyl-CoA dehydrogenase family. Homotetramer. The cofactor is FAD. In terms of processing, acetylation at Lys-318 and Lys-322 in proximity of the cofactor-binding sites strongly reduces catalytic activity. These sites are deacetylated by SIRT3.

The protein resides in the mitochondrion matrix. The enzyme catalyses a long-chain 2,3-saturated fatty acyl-CoA + oxidized [electron-transfer flavoprotein] + H(+) = a long-chain (2E)-enoyl-CoA + reduced [electron-transfer flavoprotein]. It carries out the reaction hexanoyl-CoA + oxidized [electron-transfer flavoprotein] + H(+) = (2E)-hexenoyl-CoA + reduced [electron-transfer flavoprotein]. It catalyses the reaction octanoyl-CoA + oxidized [electron-transfer flavoprotein] + H(+) = (2E)-octenoyl-CoA + reduced [electron-transfer flavoprotein]. The catalysed reaction is decanoyl-CoA + oxidized [electron-transfer flavoprotein] + H(+) = (2E)-decenoyl-CoA + reduced [electron-transfer flavoprotein]. The enzyme catalyses dodecanoyl-CoA + oxidized [electron-transfer flavoprotein] + H(+) = (2E)-dodecenoyl-CoA + reduced [electron-transfer flavoprotein]. It carries out the reaction tetradecanoyl-CoA + oxidized [electron-transfer flavoprotein] + H(+) = (2E)-tetradecenoyl-CoA + reduced [electron-transfer flavoprotein]. It catalyses the reaction oxidized [electron-transfer flavoprotein] + hexadecanoyl-CoA + H(+) = (2E)-hexadecenoyl-CoA + reduced [electron-transfer flavoprotein]. The catalysed reaction is octadecanoyl-CoA + oxidized [electron-transfer flavoprotein] + H(+) = (2E)-octadecenoyl-CoA + reduced [electron-transfer flavoprotein]. The enzyme catalyses eicosanoyl-CoA + oxidized [electron-transfer flavoprotein] + H(+) = (2E)-eicosenoyl-CoA + reduced [electron-transfer flavoprotein]. It carries out the reaction docosanoyl-CoA + oxidized [electron-transfer flavoprotein] + H(+) = (2E)-docosenoyl-CoA + reduced [electron-transfer flavoprotein]. It catalyses the reaction tetracosanoyl-CoA + oxidized [electron-transfer flavoprotein] + H(+) = (2E)-tetracosenoyl-CoA + reduced [electron-transfer flavoprotein]. The catalysed reaction is (5E)-tetradecenoyl-CoA + oxidized [electron-transfer flavoprotein] + H(+) = (2E,5E)-tetradecadienoyl-CoA + reduced [electron-transfer flavoprotein]. The enzyme catalyses (5Z)-tetradecenoyl-CoA + oxidized [electron-transfer flavoprotein] + H(+) = (2E,5Z)-tetradecadienoyl-CoA + reduced [electron-transfer flavoprotein]. It carries out the reaction oxidized [electron-transfer flavoprotein] + (9Z)-octadecenoyl-CoA + H(+) = (2E,9Z)-octadecadienoyl-CoA + reduced [electron-transfer flavoprotein]. Its pathway is lipid metabolism; mitochondrial fatty acid beta-oxidation. Functionally, long-chain specific acyl-CoA dehydrogenase is one of the acyl-CoA dehydrogenases that catalyze the first step of mitochondrial fatty acid beta-oxidation, an aerobic process breaking down fatty acids into acetyl-CoA and allowing the production of energy from fats. The first step of fatty acid beta-oxidation consists in the removal of one hydrogen from C-2 and C-3 of the straight-chain fatty acyl-CoA thioester, resulting in the formation of trans-2-enoyl-CoA. Among the different mitochondrial acyl-CoA dehydrogenases, long-chain specific acyl-CoA dehydrogenase can act on saturated and unsaturated acyl-CoAs with 6 to 24 carbons with a preference for 8 to 18 carbons long primary chains. In Macaca fascicularis (Crab-eating macaque), this protein is Long-chain specific acyl-CoA dehydrogenase, mitochondrial.